Reading from the N-terminus, the 324-residue chain is Glutathione synthetase (324 aa).

Positions 133 to 317 (KMYALQFTKA…LAHQVIQWVE (185 aa)) constitute an ATP-grasp domain. An ATP-binding site is contributed by 159 to 215 (VEAKGATVLKPLGNKAGEGILFLQAGDRNFNSIVELSTQQGRLPVMVQTYLPEAKEG). 2 residues coordinate Mg(2+): Glu-288 and Asn-290.

The protein belongs to the prokaryotic GSH synthase family. Mg(2+) is required as a cofactor. Requires Mn(2+) as cofactor.

It catalyses the reaction gamma-L-glutamyl-L-cysteine + glycine + ATP = glutathione + ADP + phosphate + H(+). It participates in sulfur metabolism; glutathione biosynthesis; glutathione from L-cysteine and L-glutamate: step 2/2. This Nostoc sp. (strain PCC 7120 / SAG 25.82 / UTEX 2576) protein is Glutathione synthetase.